The chain runs to 183 residues: Dual-action ribosomal maturation protein DarP (183 aa).

This sequence belongs to the DarP family.

The protein localises to the cytoplasm. In terms of biological role, member of a network of 50S ribosomal subunit biogenesis factors which assembles along the 30S-50S interface, preventing incorrect 23S rRNA structures from forming. Promotes peptidyl transferase center (PTC) maturation. The polypeptide is Dual-action ribosomal maturation protein DarP (Salmonella gallinarum (strain 287/91 / NCTC 13346)).